A 130-amino-acid polypeptide reads, in one-letter code: Small ribosomal subunit protein uS8 (130 aa).

It belongs to the universal ribosomal protein uS8 family. Part of the 30S ribosomal subunit.

Functionally, one of the primary rRNA binding proteins, it binds directly to 16S rRNA central domain where it helps coordinate assembly of the platform of the 30S subunit. In Pyrobaculum arsenaticum (strain DSM 13514 / JCM 11321 / PZ6), this protein is Small ribosomal subunit protein uS8.